Reading from the N-terminus, the 240-residue chain is 7-cyano-7-deazaguanine synthase (240 aa).

18 to 28 contacts ATP; sequence FSGGQDSTTCL. Positions 197, 206, 209, and 212 each coordinate Zn(2+).

This sequence belongs to the QueC family. Zn(2+) serves as cofactor.

It catalyses the reaction 7-carboxy-7-deazaguanine + NH4(+) + ATP = 7-cyano-7-deazaguanine + ADP + phosphate + H2O + H(+). Its pathway is purine metabolism; 7-cyano-7-deazaguanine biosynthesis. Functionally, catalyzes the ATP-dependent conversion of 7-carboxy-7-deazaguanine (CDG) to 7-cyano-7-deazaguanine (preQ(0)). In Shewanella baltica (strain OS223), this protein is 7-cyano-7-deazaguanine synthase.